Consider the following 526-residue polypeptide: DNA polymerase epsilon subunit B (526 aa).

It belongs to the DNA polymerase epsilon subunit B family. In terms of assembly, subunit of the DNA polymerase II. Interacts with POL2A (via C-terminus).

It localises to the nucleus. Functionally, as accessory component of DNA polymerase II participates in chromosomal DNA replication. Required for the timing and determination of cell fate during plant embryogenesis and root pole development, by promoting cell cycle and cell type patterning. Necessary for proper shoot (SAM) and root apical meristem (RAM) functions. Is essential to promote the first divisions of the zygote. The sequence is that of DNA polymerase epsilon subunit B from Arabidopsis thaliana (Mouse-ear cress).